Consider the following 590-residue polypeptide: UvrABC system protein C (590 aa).

The 84-residue stretch at 15–98 (AEPGVYQFVA…VKRHQPRYNV (84 aa)) folds into the GIY-YIG domain. The 36-residue stretch at 207-242 (GALADPLRREMAAAAQAEAFERAANLRDRLAVVEGF) folds into the UVR domain.

Belongs to the UvrC family. Interacts with UvrB in an incision complex.

It localises to the cytoplasm. Functionally, the UvrABC repair system catalyzes the recognition and processing of DNA lesions. UvrC both incises the 5' and 3' sides of the lesion. The N-terminal half is responsible for the 3' incision and the C-terminal half is responsible for the 5' incision. The sequence is that of UvrABC system protein C from Halobacterium salinarum (strain ATCC 29341 / DSM 671 / R1).